Consider the following 382-residue polypeptide: Bifunctional enzyme IspD/IspF (382 aa).

The segment at 1-226 (MTLAVLIVAA…RSTMDNIPDI (226 aa)) is 2-C-methyl-D-erythritol 4-phosphate cytidylyltransferase. The tract at residues 227 to 382 (RLGNGYDVHR…ALATATLVRA (156 aa)) is 2-C-methyl-D-erythritol 2,4-cyclodiphosphate synthase. 2 residues coordinate a divalent metal cation: aspartate 233 and histidine 235. Residues 233-235 (DVH) and 259-260 (HS) contribute to the 4-CDP-2-C-methyl-D-erythritol 2-phosphate site. Histidine 267 contacts a divalent metal cation. 4-CDP-2-C-methyl-D-erythritol 2-phosphate-binding positions include 281–283 (DIG), 357–360 (TTSE), phenylalanine 364, and arginine 367.

In the N-terminal section; belongs to the IspD/TarI cytidylyltransferase family. IspD subfamily. It in the C-terminal section; belongs to the IspF family. The cofactor is a divalent metal cation.

The enzyme catalyses 2-C-methyl-D-erythritol 4-phosphate + CTP + H(+) = 4-CDP-2-C-methyl-D-erythritol + diphosphate. It carries out the reaction 4-CDP-2-C-methyl-D-erythritol 2-phosphate = 2-C-methyl-D-erythritol 2,4-cyclic diphosphate + CMP. Its pathway is isoprenoid biosynthesis; isopentenyl diphosphate biosynthesis via DXP pathway; isopentenyl diphosphate from 1-deoxy-D-xylulose 5-phosphate: step 2/6. It participates in isoprenoid biosynthesis; isopentenyl diphosphate biosynthesis via DXP pathway; isopentenyl diphosphate from 1-deoxy-D-xylulose 5-phosphate: step 4/6. In terms of biological role, bifunctional enzyme that catalyzes the formation of 4-diphosphocytidyl-2-C-methyl-D-erythritol from CTP and 2-C-methyl-D-erythritol 4-phosphate (MEP) (IspD), and catalyzes the conversion of 4-diphosphocytidyl-2-C-methyl-D-erythritol 2-phosphate (CDP-ME2P) to 2-C-methyl-D-erythritol 2,4-cyclodiphosphate (ME-CPP) with a corresponding release of cytidine 5-monophosphate (CMP) (IspF). The polypeptide is Bifunctional enzyme IspD/IspF (Ruegeria sp. (strain TM1040) (Silicibacter sp.)).